Here is a 417-residue protein sequence, read N- to C-terminus: D-glycerate 2-kinase (417 aa).

It belongs to the glycerate kinase type-1 family. Homodimer. It depends on Mg(2+) as a cofactor.

The catalysed reaction is (R)-glycerate + ATP = (2R)-2-phosphoglycerate + ADP + H(+). Its function is as follows. Involved in the degradation of serine via 3-hydroxypyruvate. Catalyzes the ATP-dependent phosphorylation of D-glycerate to 2-phosphoglycerate. In Thermotoga maritima (strain ATCC 43589 / DSM 3109 / JCM 10099 / NBRC 100826 / MSB8), this protein is D-glycerate 2-kinase.